Here is a 218-residue protein sequence, read N- to C-terminus: NAD(P)H-quinone oxidoreductase subunit I (218 aa).

4Fe-4S ferredoxin-type domains follow at residues 55-84 (GRIH…VDWV) and 95-124 (RNYS…MTEE). Residues cysteine 64, cysteine 67, cysteine 70, cysteine 74, cysteine 104, cysteine 107, cysteine 110, and cysteine 114 each coordinate [4Fe-4S] cluster. The disordered stretch occupies residues 169–218 (MDPHDVPANQPRAGQLPAEALKSLSLQQESVQGDEGESLQDASDQDQPSG). The segment covering 208–218 (QDASDQDQPSG) has biased composition (polar residues).

Belongs to the complex I 23 kDa subunit family. NDH-1 is composed of at least 11 different subunits. Requires [4Fe-4S] cluster as cofactor.

Its subcellular location is the cellular thylakoid membrane. The catalysed reaction is a plastoquinone + NADH + (n+1) H(+)(in) = a plastoquinol + NAD(+) + n H(+)(out). It carries out the reaction a plastoquinone + NADPH + (n+1) H(+)(in) = a plastoquinol + NADP(+) + n H(+)(out). Its function is as follows. NDH-1 shuttles electrons from an unknown electron donor, via FMN and iron-sulfur (Fe-S) centers, to quinones in the respiratory and/or the photosynthetic chain. The immediate electron acceptor for the enzyme in this species is believed to be plastoquinone. Couples the redox reaction to proton translocation, and thus conserves the redox energy in a proton gradient. The chain is NAD(P)H-quinone oxidoreductase subunit I from Prochlorococcus marinus (strain MIT 9313).